We begin with the raw amino-acid sequence, 140 residues long: Large-conductance mechanosensitive channel (140 aa).

Helical transmembrane passes span 16-36 (VIDL…VTAL) and 84-104 (INTV…VKLI).

It belongs to the MscL family. Homopentamer.

The protein localises to the cell inner membrane. Channel that opens in response to stretch forces in the membrane lipid bilayer. May participate in the regulation of osmotic pressure changes within the cell. The chain is Large-conductance mechanosensitive channel from Xanthomonas oryzae pv. oryzae (strain MAFF 311018).